The chain runs to 752 residues: uncharacterized protein (752 aa).

2 positions are modified to phosphoserine: Ser202 and Ser582. Residues 596–752 (EEEKESVEVE…KTGEDGEIVL (157 aa)) form a disordered region. Basic and acidic residues-rich tracts occupy residues 601–613 (SVEVEEGKHKNDL) and 641–677 (LKSEDDNTSEASKDPSSHVKSPENIEKLKQNDDHFEV). Polar residues predominate over residues 695–718 (NNVAETILEVTSSPKSSENSQKQS). Phosphoserine occurs at positions 707 and 738.

This is an uncharacterized protein from Schizosaccharomyces pombe (strain 972 / ATCC 24843) (Fission yeast).